The following is a 595-amino-acid chain: Actin-histidine N-methyltransferase (595 aa).

The segment at 1–22 (MGKKSRVKTQKSGTGATATVSP) is disordered. Polar residues predominate over residues 10–20 (QKSGTGATATV). S-adenosyl-L-methionine is bound by residues R75, 104–106 (EGF), R254, 275–279 (DMCNH), and 325–327 (SGF). The 221-residue stretch at 94-314 (EGFEMVNFKE…AGEQIYIFYG (221 aa)) folds into the SET domain. The residue at position 513 (S513) is a Phosphoserine. Over residues 549 to 563 (ENGLVNGENSIPNGT) the composition is skewed to polar residues. Positions 549–595 (ENGLVNGENSIPNGTRSEDENLNQEESKRAVEDAKGSSSDRADAVKE) are disordered. A compositionally biased stretch (basic and acidic residues) spans 573 to 595 (EESKRAVEDAKGSSSDRADAVKE).

This sequence belongs to the class V-like SAM-binding methyltransferase superfamily. SETD3 actin-histidine methyltransferase family. In terms of assembly, interacts with MYOD1. Phosphorylated by GSK3B, which is required for recognition by the SCF(FBXW7) complex and subsequent degradation. In terms of processing, ubiquitinated by the SCF(FBXW7) complex following phosphorylation by GSK3B, leading to its degradation by the proteasome.

Its subcellular location is the cytoplasm. The protein localises to the nucleus. It catalyses the reaction L-histidyl-[protein] + S-adenosyl-L-methionine = N(tele)-methyl-L-histidyl-[protein] + S-adenosyl-L-homocysteine + H(+). In terms of biological role, protein-histidine N-methyltransferase that specifically mediates 3-methylhistidine (tele-methylhistidine) methylation of actin at 'His-73'. Histidine methylation of actin is required for smooth muscle contraction of the laboring uterus during delivery. Does not have protein-lysine N-methyltransferase activity and probably only catalyzes histidine methylation of actin. The sequence is that of Actin-histidine N-methyltransferase from Callithrix jacchus (White-tufted-ear marmoset).